The chain runs to 103 residues: Large ribosomal subunit protein bL21 (103 aa).

It belongs to the bacterial ribosomal protein bL21 family. Part of the 50S ribosomal subunit. Contacts protein L20.

This protein binds to 23S rRNA in the presence of protein L20. The polypeptide is Large ribosomal subunit protein bL21 (Glaesserella parasuis serovar 5 (strain SH0165) (Haemophilus parasuis)).